We begin with the raw amino-acid sequence, 100 residues long: uncharacterized protein (100 aa).

Residues 68 to 88 (VFLFFFTGSSPSFPAALLGLF) traverse the membrane as a helical segment.

Its subcellular location is the membrane. This is an uncharacterized protein from Saccharomyces cerevisiae (strain ATCC 204508 / S288c) (Baker's yeast).